An 853-amino-acid chain; its full sequence is Leucine--tRNA ligase (853 aa).

The 'HIGH' region motif lies at 42 to 52; that stretch reads PYPSGNLHMGH. Positions 615-619 match the 'KMSKS' region motif; sequence KMSKS. Lysine 618 is a binding site for ATP.

It belongs to the class-I aminoacyl-tRNA synthetase family.

It is found in the cytoplasm. It catalyses the reaction tRNA(Leu) + L-leucine + ATP = L-leucyl-tRNA(Leu) + AMP + diphosphate. The chain is Leucine--tRNA ligase from Crocosphaera subtropica (strain ATCC 51142 / BH68) (Cyanothece sp. (strain ATCC 51142)).